A 35-amino-acid chain; its full sequence is Kappa-theraphotoxin-Tb1c (35 aa).

Intrachain disulfides connect C3-C18, C10-C23, and C17-C30.

It belongs to the neurotoxin 10 (Hwtx-1) family. 59 (Tltx) subfamily. In terms of assembly, monomer. Expressed by the venom gland.

The protein localises to the secreted. Its function is as follows. Blocks Kv4.2/KCND2 voltage-gated potassium channels probably by shifting the voltage-dependence of channel activation to more depolarized potentials and by binding to the S3-S4 linker region of the voltage sensor domain. The chain is Kappa-theraphotoxin-Tb1c from Theraphosa blondi (Goliath birdeating spider).